Consider the following 425-residue polypeptide: Trigger factor (425 aa).

One can recognise a PPIase FKBP-type domain in the interval 163–248 (GDTAVIDFEG…IHEIKTKELP (86 aa)).

The protein belongs to the FKBP-type PPIase family. Tig subfamily.

The protein localises to the cytoplasm. It catalyses the reaction [protein]-peptidylproline (omega=180) = [protein]-peptidylproline (omega=0). Functionally, involved in protein export. Acts as a chaperone by maintaining the newly synthesized protein in an open conformation. Functions as a peptidyl-prolyl cis-trans isomerase. The sequence is that of Trigger factor from Bacillus cereus (strain G9842).